A 513-amino-acid chain; its full sequence is MRLEVFCEDRLGLTRELLDLLVLRGIDLRGIEIDPIGRIYLNFAELEFESFSSLMAEIRRIAGVTDVRTVPWMPSEREHLALSALLEALPEPVLSVDMKSKVDMANPASCQLFGQKLDRLRNHTAAQLINGFNFLRWLESEPQDSHNEHVVINGQNFLMEITPVYLQDENDQHVLTGAVVMLRSTIRMGRQLQNVAAQDVSAFSQIVAVSPKMKHVVEQAQKLAMLSAPLLITGDTGTGKDLFAYACHQASPRAGKPYLALNCASIPEDAVESELFGHAPEGKKGFFEQANGGSVLLDEIGEMSPRMQAKLLRFLNDGTFRRVGEDHEVHVDVRVICATQKNLVELVQKGMFREDLYYRLNVLTLNLPPLRDCPQDIMPLTELFVARFADEQGVPRPKLAADLNTVLTRYAWPGNVRQLKNAIYRALTQLDGYELRPQDILLPDYDAATVAVGEDAMEGSLDEITSRFERSVLTQLYRNYPSTRKLAKRLGVSHTAIANKLREYGLSQKKNEE.

The ACT domain occupies 2 to 72 (RLEVFCEDRL…GVTDVRTVPW (71 aa)). The 37-residue stretch at 78-114 (EHLALSALLEALPEPVLSVDMKSKVDMANPASCQLFG) folds into the PAS domain. Residues 206-428 (IVAVSPKMKH…LKNAIYRALT (223 aa)) enclose the Sigma-54 factor interaction domain. ATP is bound by residues 234–241 (GDTGTGKD) and 290–299 (ANGGSVLLDE). Positions 482–502 (STRKLAKRLGVSHTAIANKLR) form a DNA-binding region, H-T-H motif.

As to quaternary structure, homodimer. In presence of tyrosine (or high concentrations of phenylalanine or tryptophan) and ATP, it self-associates to form an hexamer. At low tyrosine concentrations, homodimers can bind to certain recognition sequences referred to as 'strong TyrR boxes'. Homohexamers are the active repressing species, interacting with two or three tyrR boxes in the targeted regulatory DNA, including 'strong TyrR boxes' and lower-affinity sites called 'weak TyrR boxes'.

The protein resides in the cytoplasm. Its activity is regulated as follows. Binding of ATP strongly enhances the affinity of TyrR for tyrosine. In terms of biological role, dual transcriptional regulator of the TyrR regulon, which includes a number of genes coding for proteins involved in the biosynthesis or transport of the three aromatic amino acids, phenylalanine, tyrosine and tryptophan. These three aromatic amino acids act as effectors which bind to the TyrR protein to form an active regulatory protein. Modulates the expression of at least eight unlinked transcription units, including aroF, aroG, aroLM, aroP, mtr, tyrA, tyrB and tyrP. In most cases TyrR acts as a repressor, but positive effects have been observed on the tyrP gene, which is repressed in the presence of tyrosine and activated at high phenylalanine concentrations. Is also involved in activation, but not repression, of mtr expression in association with phenylalanine or tyrosine. Acts by binding specifically to TyrR boxes in the promoter region of the target genes. The protein is HTH-type transcriptional regulatory protein TyrR of Escherichia coli (strain K12).